The primary structure comprises 238 residues: Protein LicA homolog (238 aa).

The protein belongs to the peptidase S49 family.

The sequence is that of Protein LicA homolog (licA) from Mycoplasma capricolum subsp. capricolum (strain California kid / ATCC 27343 / NCTC 10154).